A 196-amino-acid chain; its full sequence is Ribosome maturation factor RimP (196 aa).

The segment covering 131–145 has biased composition (basic residues); it reads KKKAGKKSQGKKAGK. The segment at 131–153 is disordered; that stretch reads KKKAGKKSQGKKAGKKTPQAPVQ.

The protein belongs to the RimP family.

It is found in the cytoplasm. Its function is as follows. Required for maturation of 30S ribosomal subunits. The protein is Ribosome maturation factor RimP of Corynebacterium urealyticum (strain ATCC 43042 / DSM 7109).